The following is a 49-amino-acid chain: uncharacterized protein (49 aa).

Residues 8-28 (FFLFSSGVLQATTLLLVILIF) traverse the membrane as a helical segment.

It is found in the cell membrane. This is an uncharacterized protein from Bacillus subtilis (strain 168).